A 478-amino-acid polypeptide reads, in one-letter code: Aspartyl/glutamyl-tRNA(Asn/Gln) amidotransferase subunit B (478 aa).

The protein belongs to the GatB/GatE family. GatB subfamily. In terms of assembly, heterotrimer of A, B and C subunits.

The enzyme catalyses L-glutamyl-tRNA(Gln) + L-glutamine + ATP + H2O = L-glutaminyl-tRNA(Gln) + L-glutamate + ADP + phosphate + H(+). It carries out the reaction L-aspartyl-tRNA(Asn) + L-glutamine + ATP + H2O = L-asparaginyl-tRNA(Asn) + L-glutamate + ADP + phosphate + 2 H(+). Its function is as follows. Allows the formation of correctly charged Asn-tRNA(Asn) or Gln-tRNA(Gln) through the transamidation of misacylated Asp-tRNA(Asn) or Glu-tRNA(Gln) in organisms which lack either or both of asparaginyl-tRNA or glutaminyl-tRNA synthetases. The reaction takes place in the presence of glutamine and ATP through an activated phospho-Asp-tRNA(Asn) or phospho-Glu-tRNA(Gln). The chain is Aspartyl/glutamyl-tRNA(Asn/Gln) amidotransferase subunit B from Brevibacillus brevis (strain 47 / JCM 6285 / NBRC 100599).